Here is a 159-residue protein sequence, read N- to C-terminus: Dihydrofolate reductase (159 aa).

Residues 2–157 (TLSILVAHDL…IPHTFLHLIR (156 aa)) enclose the DHFR domain. 6-8 (LVA) is a substrate binding site. Residues 7-8 (VA) and 15-20 (IGFENQ) each bind NADP(+). D28 contacts substrate. 44 to 47 (GRKT) lines the NADP(+) pocket. Substrate is bound at residue R58. NADP(+) contacts are provided by residues 63-66 (LTSD) and 93-98 (FGGQTL). Position 112 (T112) interacts with substrate.

This sequence belongs to the dihydrofolate reductase family.

It carries out the reaction (6S)-5,6,7,8-tetrahydrofolate + NADP(+) = 7,8-dihydrofolate + NADPH + H(+). Its pathway is cofactor biosynthesis; tetrahydrofolate biosynthesis; 5,6,7,8-tetrahydrofolate from 7,8-dihydrofolate: step 1/1. Its function is as follows. Key enzyme in folate metabolism. Catalyzes an essential reaction for de novo glycine and purine synthesis, and for DNA precursor synthesis. This is Dihydrofolate reductase (folA) from Staphylococcus aureus (strain COL).